Here is a 1026-residue protein sequence, read N- to C-terminus: DNA polymerase catalytic subunit (1026 aa).

A coiled-coil region spans residues 664–695 (LKTWLAKRKSIKKELEQCQDAKMKTILDKQQL).

The protein belongs to the DNA polymerase type-B family.

The protein localises to the host nucleus. The catalysed reaction is DNA(n) + a 2'-deoxyribonucleoside 5'-triphosphate = DNA(n+1) + diphosphate. Its function is as follows. Replicates viral genomic DNA. The protein is DNA polymerase catalytic subunit (9) of Alcelaphine herpesvirus 1 (strain C500) (AlHV-1).